A 476-amino-acid polypeptide reads, in one-letter code: Bifunctional protein HldE (476 aa).

Positions 1–319 (MKVTLPAFEK…GALASHQGES (319 aa)) are ribokinase. Residue 195 to 198 (NMSE) participates in ATP binding. Aspartate 264 is an active-site residue. Residues 345–476 (MTNGCFDILH…SIIQNIMARQ (132 aa)) are cytidylyltransferase.

It in the N-terminal section; belongs to the carbohydrate kinase PfkB family. This sequence in the C-terminal section; belongs to the cytidylyltransferase family. As to quaternary structure, homodimer.

The enzyme catalyses D-glycero-beta-D-manno-heptose 7-phosphate + ATP = D-glycero-beta-D-manno-heptose 1,7-bisphosphate + ADP + H(+). The catalysed reaction is D-glycero-beta-D-manno-heptose 1-phosphate + ATP + H(+) = ADP-D-glycero-beta-D-manno-heptose + diphosphate. The protein operates within nucleotide-sugar biosynthesis; ADP-L-glycero-beta-D-manno-heptose biosynthesis; ADP-L-glycero-beta-D-manno-heptose from D-glycero-beta-D-manno-heptose 7-phosphate: step 1/4. It participates in nucleotide-sugar biosynthesis; ADP-L-glycero-beta-D-manno-heptose biosynthesis; ADP-L-glycero-beta-D-manno-heptose from D-glycero-beta-D-manno-heptose 7-phosphate: step 3/4. In terms of biological role, catalyzes the phosphorylation of D-glycero-D-manno-heptose 7-phosphate at the C-1 position to selectively form D-glycero-beta-D-manno-heptose-1,7-bisphosphate. Functionally, catalyzes the ADP transfer from ATP to D-glycero-beta-D-manno-heptose 1-phosphate, yielding ADP-D-glycero-beta-D-manno-heptose. The polypeptide is Bifunctional protein HldE (Shewanella denitrificans (strain OS217 / ATCC BAA-1090 / DSM 15013)).